The chain runs to 330 residues: GMP reductase (330 aa).

The active-site Thioimidate intermediate is the Cys180. 209-232 (LIADGGIRHNGDIAKSVRFGASMV) is a binding site for NADP(+).

It belongs to the IMPDH/GMPR family. GuaC type 2 subfamily.

It catalyses the reaction IMP + NH4(+) + NADP(+) = GMP + NADPH + 2 H(+). Catalyzes the irreversible NADPH-dependent deamination of GMP to IMP. It functions in the conversion of nucleobase, nucleoside and nucleotide derivatives of G to A nucleotides, and in maintaining the intracellular balance of A and G nucleotides. The chain is GMP reductase from Lactobacillus johnsonii (strain CNCM I-12250 / La1 / NCC 533).